The chain runs to 509 residues: Sorting nexin MVP1 (509 aa).

Residues 1–25 (MDTYSGQNGWADTSNASPWGDTNDT) are compositionally biased toward polar residues. The disordered stretch occupies residues 1–28 (MDTYSGQNGWADTSNASPWGDTNDTMPI). The 120-residue stretch at 126-245 (QLDIISIEEI…TFLTVPTDLT (120 aa)) folds into the PX domain. Residues arginine 170, serine 172, lysine 196, and arginine 211 each coordinate a 1,2-diacyl-sn-glycero-3-phospho-(1D-myo-inositol-3-phosphate).

This sequence belongs to the sorting nexin family.

The protein resides in the cytoplasm. The protein localises to the membrane. Required for vacuolar protein sorting. This is Sorting nexin MVP1 (MVP1) from Candida glabrata (strain ATCC 2001 / BCRC 20586 / JCM 3761 / NBRC 0622 / NRRL Y-65 / CBS 138) (Yeast).